Consider the following 462-residue polypeptide: Metal cation symporter ZIP14 (462 aa).

The N-terminal stretch at 1–16 is a signal peptide; that stretch reads MPLLLLSALLPFSLMA. The Extracellular segment spans residues 17–138; it reads GPTPSTGKEL…PSPGEVWGYG (122 aa). 4 N-linked (GlcNAc...) asparagine glycosylation sites follow: Asn-42, Asn-68, Asn-83, and Asn-119. Residues 139 to 159 traverse the membrane as a helical segment; sequence FLCVTVISLCSLFGAGVVPFM. Residues 160 to 167 lie on the Cytoplasmic side of the membrane; it reads KKACYKRL. A helical membrane pass occupies residues 168 to 188; the sequence is LLFCIALAIGTLFSNALFQLI. Residues 189 to 201 are Extracellular-facing; sequence PEAFGFNPLEDSY. A helical membrane pass occupies residues 202-222; that stretch reads VFTSSVIFGGFYLFFFTEKVL. Residues 223-322 lie on the Cytoplasmic side of the membrane; it reads KMMLKQKHEH…SDGLHNFIDG (100 aa). The HHHGHXHX-motif motif lies at 230–237; that stretch reads HEHGHSHY. The interval 235-285 is disordered; the sequence is SHYSADTSKRDAEEGVTEKLQNGDLDHMIPPPHGSESDLRGDEKAVQQQDL. Basic and acidic residues-rich tracts occupy residues 241-251 and 269-279; these read TSKRDAEEGVT and SESDLRGDEKA. A helical transmembrane segment spans residues 323-343; that stretch reads LAIGASFTVSVFQGVSTSIAI. The Extracellular portion of the chain corresponds to 344–367; that stretch reads LCEEFPHELGDFVILLNAGMSIPQ. Positions 346–351 match the XEXPHE-motif motif; sequence EEFPHE. The helical transmembrane segment at 368–388 threads the bilayer; sequence ALFFNFLSACCCYLGLAFGIL. The Cytoplasmic portion of the chain corresponds to 389-396; the sequence is AGSHFSSN. A helical membrane pass occupies residues 397-417; that stretch reads WIFALAGGMFLYIALSDMFPE. Topologically, residues 418 to 431 are extracellular; sequence MNEVSKEDEEGGRA. The helical transmembrane segment at 432–452 threads the bilayer; it reads FSAFMIQNAGLLTGFAIMLLL. Residues 453 to 462 are Cytoplasmic-facing; sequence TTFSGQIQLG.

Belongs to the ZIP transporter (TC 2.A.5) family. In terms of assembly, homotrimer.

The protein resides in the cell membrane. It localises to the apical cell membrane. Its subcellular location is the basolateral cell membrane. The protein localises to the early endosome membrane. It is found in the late endosome membrane. The protein resides in the lysosome membrane. The enzyme catalyses Zn(2+)(out) + 2 hydrogencarbonate(out) = Zn(2+)(in) + 2 hydrogencarbonate(in). It catalyses the reaction Mn(2+)(out) + 2 hydrogencarbonate(out) = Mn(2+)(in) + 2 hydrogencarbonate(in). The catalysed reaction is Fe(2+)(out) + 2 hydrogencarbonate(out) = Fe(2+)(in) + 2 hydrogencarbonate(in). It carries out the reaction Cd(2+)(out) + 2 hydrogencarbonate(out) = Cd(2+)(in) + 2 hydrogencarbonate(in). Its function is as follows. Electroneutral transporter of the plasma membrane mediating the cellular uptake of the divalent metal cations zinc, manganese and iron that are important for tissue homeostasis, metabolism, development and immunity. Functions as an energy-dependent symporter, transporting through the membranes an electroneutral complex composed of a divalent metal cation and two bicarbonate anions. Beside these endogenous cellular substrates, can also import cadmium a non-essential metal which is cytotoxic and carcinogenic. The sequence is that of Metal cation symporter ZIP14 from Xenopus tropicalis (Western clawed frog).